A 272-amino-acid chain; its full sequence is Orotidine 5'-phosphate decarboxylase (272 aa).

K95 functions as the Proton donor in the catalytic mechanism.

Belongs to the OMP decarboxylase family. Type 2 subfamily.

It catalyses the reaction orotidine 5'-phosphate + H(+) = UMP + CO2. Its pathway is pyrimidine metabolism; UMP biosynthesis via de novo pathway; UMP from orotate: step 2/2. The chain is Orotidine 5'-phosphate decarboxylase from Bordetella petrii (strain ATCC BAA-461 / DSM 12804 / CCUG 43448).